Consider the following 607-residue polypeptide: ATP-dependent RNA helicase dbp9 (607 aa).

A Q motif motif is present at residues 24–52 (ATFASLGLDARLLQGIAKQNFQSPTLVQS). Residues 55–232 (IPLTLEGRDI…GLFCRNPEVL (178 aa)) form the Helicase ATP-binding domain. ATP is bound at residue 68–75 (AKTGSGKT). Positions 180 to 183 (DEAD) match the DEAD box motif. One can recognise a Helicase C-terminal domain in the interval 243–475 (GVSQFVVKCA…EVKPYNFDMK (233 aa)). Disordered stretches follow at residues 332 to 380 (VLGD…GKKD) and 580 to 607 (ARAANKAKGRGKGRKSDPLKTFKAKSRK). Acidic residues predominate over residues 334–352 (GDEDEPKPEETEEVEADDA). Basic and acidic residues predominate over residues 353–368 (SGEKEDAKDAKKETKQ). Over residues 580 to 592 (ARAANKAKGRGKG) the composition is skewed to basic residues.

This sequence belongs to the DEAD box helicase family. DDX56/DBP9 subfamily.

Its subcellular location is the nucleus. The protein resides in the nucleolus. It catalyses the reaction ATP + H2O = ADP + phosphate + H(+). Its function is as follows. ATP-binding RNA helicase involved in the biogenesis of 60S ribosomal subunits and is required for the normal formation of 25S and 5.8S rRNAs. The sequence is that of ATP-dependent RNA helicase dbp9 (dbp9) from Sclerotinia sclerotiorum (strain ATCC 18683 / 1980 / Ss-1) (White mold).